We begin with the raw amino-acid sequence, 197 residues long: Fucoxanthin-chlorophyll a-c binding protein C, chloroplastic (197 aa).

A chloroplast-targeting transit peptide spans 1–31; sequence MKTAVIASLIAGAAAFAPAKNAARTSVATNM. Transmembrane regions (helical) follow at residues 73-94, 113-133, and 174-196; these read ISML…PGTI, IPAG…SSVM, and GRAA…SLLP.

This sequence belongs to the fucoxanthin chlorophyll protein family. In terms of assembly, the LHC complex of chromophytic algae is composed of fucoxanthin, chlorophyll A and C bound non-covalently by fucoxanthin chlorophyll proteins (FCPs). The ratio of the pigments in LHC; fucoxanthin: chlorophyll C: chlorophyll A; (0.6-1): (0.1-0.3): (1).

Its subcellular location is the plastid. It is found in the chloroplast thylakoid membrane. Functionally, the light-harvesting complex (LHC) functions as a light receptor, it captures and delivers excitation energy to photosystems with which it is closely associated. Energy is transferred from the carotenoid and chlorophyll C (or B) to chlorophyll A and the photosynthetic reaction centers where it is used to synthesize ATP and reducing power. The sequence is that of Fucoxanthin-chlorophyll a-c binding protein C, chloroplastic (FCPC) from Phaeodactylum tricornutum (Diatom).